Here is a 350-residue protein sequence, read N- to C-terminus: Histidinol-phosphate aminotransferase 1 (350 aa).

N6-(pyridoxal phosphate)lysine is present on lysine 211.

This sequence belongs to the class-II pyridoxal-phosphate-dependent aminotransferase family. Histidinol-phosphate aminotransferase subfamily. In terms of assembly, homodimer. It depends on pyridoxal 5'-phosphate as a cofactor.

The catalysed reaction is L-histidinol phosphate + 2-oxoglutarate = 3-(imidazol-4-yl)-2-oxopropyl phosphate + L-glutamate. Its pathway is amino-acid biosynthesis; L-histidine biosynthesis; L-histidine from 5-phospho-alpha-D-ribose 1-diphosphate: step 7/9. This is Histidinol-phosphate aminotransferase 1 from Trichormus variabilis (strain ATCC 29413 / PCC 7937) (Anabaena variabilis).